A 180-amino-acid polypeptide reads, in one-letter code: FMN reductase (NADH) RutF (180 aa).

The protein belongs to the non-flavoprotein flavin reductase family. RutF subfamily.

It carries out the reaction FMNH2 + NAD(+) = FMN + NADH + 2 H(+). In terms of biological role, catalyzes the reduction of FMN to FMNH2 which is used to reduce pyrimidine by RutA via the Rut pathway. The sequence is that of FMN reductase (NADH) RutF from Bradyrhizobium diazoefficiens (strain JCM 10833 / BCRC 13528 / IAM 13628 / NBRC 14792 / USDA 110).